Reading from the N-terminus, the 390-residue chain is MKFVDEASVKIEAGDGGNGTVSFWREKFVAKGGPDGGDGGDGGDVYIQADENLNTLIDYRFQRFYNAERGENGRGGNCTGKRGKDMTMKVPVGTRAVDIHTNEIVAEVAEHGKKVMVGKGGWHGLGNTRFKSSVNRAPRQKTMGTKGEVRELRLELLLLADVGMLGLPNAGKSTFIRSVSAAKPKVADYPFTTLIPSLGVVSVVPEKSFVVADIPGLIEGAADGAGLGIRFLKHLERCRVLLHMIDILPIDGSDPIQNALTIIDELEQYSEKVAQKPRWLVFNKVDLMPEEEADEKIQEIVEALGWEGEYFKISAVNKIGTKDLCFKLGEFMENLPREVEAIEEEEKVNFMWDDYHKDAMAGKNVVTEDDDDWDDWDDEEDDGHVIYVRD.

An Obg domain is found at 1-159 (MKFVDEASVK…RELRLELLLL (159 aa)). The region spanning 160–333 (ADVGMLGLPN…LCFKLGEFME (174 aa)) is the OBG-type G domain. GTP is bound by residues 166 to 173 (GLPNAGKS), 191 to 195 (FTTLI), 213 to 216 (DIPG), 283 to 286 (NKVD), and 314 to 316 (SAV). Residues Ser-173 and Thr-193 each coordinate Mg(2+).

Belongs to the TRAFAC class OBG-HflX-like GTPase superfamily. OBG GTPase family. As to quaternary structure, monomer. Mg(2+) is required as a cofactor.

The protein localises to the cytoplasm. In terms of biological role, an essential GTPase which binds GTP, GDP and possibly (p)ppGpp with moderate affinity, with high nucleotide exchange rates and a fairly low GTP hydrolysis rate. Plays a role in control of the cell cycle, stress response, ribosome biogenesis and in those bacteria that undergo differentiation, in morphogenesis control. This Vibrio atlanticus (strain LGP32) (Vibrio splendidus (strain Mel32)) protein is GTPase Obg.